The chain runs to 104 residues: Large ribosomal subunit protein uL24 (104 aa).

It belongs to the universal ribosomal protein uL24 family. In terms of assembly, part of the 50S ribosomal subunit.

Its function is as follows. One of two assembly initiator proteins, it binds directly to the 5'-end of the 23S rRNA, where it nucleates assembly of the 50S subunit. One of the proteins that surrounds the polypeptide exit tunnel on the outside of the subunit. The chain is Large ribosomal subunit protein uL24 from Pseudomonas savastanoi pv. phaseolicola (strain 1448A / Race 6) (Pseudomonas syringae pv. phaseolicola (strain 1448A / Race 6)).